A 177-amino-acid polypeptide reads, in one-letter code: tRNA (cytidine(56)-2'-O)-methyltransferase (177 aa).

S-adenosyl-L-methionine is bound by residues Leu-84 and 109–113; that span reads GAEKV.

This sequence belongs to the aTrm56 family. Homodimer.

Its subcellular location is the cytoplasm. It catalyses the reaction cytidine(56) in tRNA + S-adenosyl-L-methionine = 2'-O-methylcytidine(56) in tRNA + S-adenosyl-L-homocysteine + H(+). Its function is as follows. Specifically catalyzes the AdoMet-dependent 2'-O-ribose methylation of cytidine at position 56 in tRNAs. This is tRNA (cytidine(56)-2'-O)-methyltransferase from Methanosarcina mazei (strain ATCC BAA-159 / DSM 3647 / Goe1 / Go1 / JCM 11833 / OCM 88) (Methanosarcina frisia).